Consider the following 374-residue polypeptide: Tryptophan--tRNA ligase (374 aa).

Positions 81-89 (PSGPVHIGH) match the 'HIGH' region motif. The short motif at 258–262 (KMSAS) is the 'KMSKS' region element.

The protein belongs to the class-I aminoacyl-tRNA synthetase family.

The protein localises to the cytoplasm. The enzyme catalyses tRNA(Trp) + L-tryptophan + ATP = L-tryptophyl-tRNA(Trp) + AMP + diphosphate + H(+). The protein is Tryptophan--tRNA ligase of Pyrobaculum calidifontis (strain DSM 21063 / JCM 11548 / VA1).